Here is a 101-residue protein sequence, read N- to C-terminus: Large ribosomal subunit protein bL21 (101 aa).

It belongs to the bacterial ribosomal protein bL21 family. Part of the 50S ribosomal subunit. Contacts protein L20.

Its function is as follows. This protein binds to 23S rRNA in the presence of protein L20. The chain is Large ribosomal subunit protein bL21 from Metamycoplasma arthritidis (strain 158L3-1) (Mycoplasma arthritidis).